The primary structure comprises 339 residues: MRVYYDRDADLNLIKAKKVAVIGYGSQGRAHALNLKDSGAQNLVIALKAGSPTVKKAEADGFKVMTVAEAAGWADLMMMATPDELQADIYKADIAPNIRDGAAIAFAHGLNVHFGLIEPKASVDVVMIAPKGPGHTVRGEYQKGGGVPCLVAVHQNASGNALELALSYACGVGGGRSGIIETNFREECETDLFGEQVVLCGGLVELIRAGFETLTEAGYAPEMAYFECLHEVKLIVDLIYEGGIANMNYSISNTAEWGEYVTGPRIITEETKAEMKRVLKDIQTGKFTSEWMQEYRSGAARFKGIRRNNDSHQIEEVGAKLRGMMPWIGKNKLVDKSVN.

The 182-residue stretch at 1-182 (MRVYYDRDAD…GGGRSGIIET (182 aa)) folds into the KARI N-terminal Rossmann domain. Residues 24–27 (YGSQ), Lys-48, Ser-51, Thr-53, and 83–86 (DELQ) contribute to the NADP(+) site. His-108 is an active-site residue. Residue Gly-134 participates in NADP(+) binding. One can recognise a KARI C-terminal knotted domain in the interval 183 to 328 (NFREECETDL…AKLRGMMPWI (146 aa)). Residues Asp-191, Glu-195, Glu-227, and Glu-231 each contribute to the Mg(2+) site. Substrate is bound at residue Ser-252.

The protein belongs to the ketol-acid reductoisomerase family. It depends on Mg(2+) as a cofactor.

It carries out the reaction (2R)-2,3-dihydroxy-3-methylbutanoate + NADP(+) = (2S)-2-acetolactate + NADPH + H(+). The catalysed reaction is (2R,3R)-2,3-dihydroxy-3-methylpentanoate + NADP(+) = (S)-2-ethyl-2-hydroxy-3-oxobutanoate + NADPH + H(+). The protein operates within amino-acid biosynthesis; L-isoleucine biosynthesis; L-isoleucine from 2-oxobutanoate: step 2/4. It participates in amino-acid biosynthesis; L-valine biosynthesis; L-valine from pyruvate: step 2/4. Involved in the biosynthesis of branched-chain amino acids (BCAA). Catalyzes an alkyl-migration followed by a ketol-acid reduction of (S)-2-acetolactate (S2AL) to yield (R)-2,3-dihydroxy-isovalerate. In the isomerase reaction, S2AL is rearranged via a Mg-dependent methyl migration to produce 3-hydroxy-3-methyl-2-ketobutyrate (HMKB). In the reductase reaction, this 2-ketoacid undergoes a metal-dependent reduction by NADPH to yield (R)-2,3-dihydroxy-isovalerate. The sequence is that of Ketol-acid reductoisomerase (NADP(+)) from Rhizobium etli (strain ATCC 51251 / DSM 11541 / JCM 21823 / NBRC 15573 / CFN 42).